Here is a 369-residue protein sequence, read N- to C-terminus: Pyruvate dehydrogenase E1 component subunit alpha (369 aa).

In terms of assembly, heterodimer of an alpha and a beta chain. The cofactor is thiamine diphosphate.

It catalyses the reaction N(6)-[(R)-lipoyl]-L-lysyl-[protein] + pyruvate + H(+) = N(6)-[(R)-S(8)-acetyldihydrolipoyl]-L-lysyl-[protein] + CO2. Functionally, the pyruvate dehydrogenase complex catalyzes the overall conversion of pyruvate to acetyl-CoA and CO(2). It contains multiple copies of three enzymatic components: pyruvate dehydrogenase (E1), dihydrolipoamide acetyltransferase (E2) and lipoamide dehydrogenase (E3). This is Pyruvate dehydrogenase E1 component subunit alpha (pdhA) from Geobacillus stearothermophilus (Bacillus stearothermophilus).